The sequence spans 230 residues: Triggering receptor expressed on myeloid cells 1 (230 aa).

The first 20 residues, 1–20, serve as a signal peptide directing secretion; the sequence is MRKAGLWGLLCVFFVSEVKA. One can recognise an Ig-like V-type domain in the interval 21 to 124; that stretch reads AIVLEEERYD…IYHPPNDPVV (104 aa). The Extracellular portion of the chain corresponds to 21–202; the sequence is AIVLEEERYD…TDADSVSTSS (182 aa). An intrachain disulfide couples Cys41 to Cys113. The N-linked (GlcNAc...) asparagine glycan is linked to Asn191. A helical membrane pass occupies residues 203 to 223; that stretch reads VTISVICGLLSKSLVFIILFI. The Cytoplasmic portion of the chain corresponds to 224–230; sequence VTKRTFG.

In terms of assembly, monomer. Homomultimer; when activated. Interacts with TYROBP/DAP12. Interacts with TLR4.

The protein resides in the cell membrane. In terms of biological role, cell surface receptor that plays important roles in innate and adaptive immunity by amplifying inflammatory responses. Upon activation by various ligands such as PGLYRP1, HMGB1 or HSP70, multimerizes and forms a complex with transmembrane adapter TYROBP/DAP12. In turn, initiates a SYK-mediated cascade of tyrosine phosphorylation, activating multiple downstream mediators such as BTK, MAPK1, MAPK3 or phospholipase C-gamma. This cascade promotes the neutrophil- and macrophage-mediated release of pro-inflammatory cytokines and/or chemokines, as well as their migration and thereby amplifies inflammatory responses that are triggered by bacterial and fungal infections. By also promoting the amplification of inflammatory signals that are initially triggered by Toll-like receptor (TLR) and NOD-like receptor engagement, plays a major role in the pathophysiology of acute and chronic inflammatory diseases of different etiologies including septic shock and atherosclerosis. This is Triggering receptor expressed on myeloid cells 1 (Trem1) from Mus musculus (Mouse).